The sequence spans 217 residues: Pyrophosphatase PpaX (217 aa).

D11 serves as the catalytic Nucleophile.

Belongs to the HAD-like hydrolase superfamily. PpaX family. Mg(2+) is required as a cofactor.

The enzyme catalyses diphosphate + H2O = 2 phosphate + H(+). Its function is as follows. Hydrolyzes pyrophosphate formed during P-Ser-HPr dephosphorylation by HPrK/P. Might play a role in controlling the intracellular pyrophosphate pool. This chain is Pyrophosphatase PpaX, found in Listeria welshimeri serovar 6b (strain ATCC 35897 / DSM 20650 / CCUG 15529 / CIP 8149 / NCTC 11857 / SLCC 5334 / V8).